A 459-amino-acid chain; its full sequence is Jacalin-related lectin 12 (459 aa).

Jacalin-type lectin domains follow at residues 2–148 (SQDS…YFTP), 151–296 (PTRM…YITT), and 298–443 (TLTK…YSFP).

Belongs to the jacalin lectin family.

This Arabidopsis thaliana (Mouse-ear cress) protein is Jacalin-related lectin 12 (JAL12).